A 318-amino-acid polypeptide reads, in one-letter code: Methionyl-tRNA formyltransferase (318 aa).

112 to 115 (SILP) is a (6S)-5,6,7,8-tetrahydrofolate binding site.

Belongs to the Fmt family.

It catalyses the reaction L-methionyl-tRNA(fMet) + (6R)-10-formyltetrahydrofolate = N-formyl-L-methionyl-tRNA(fMet) + (6S)-5,6,7,8-tetrahydrofolate + H(+). In terms of biological role, attaches a formyl group to the free amino group of methionyl-tRNA(fMet). The formyl group appears to play a dual role in the initiator identity of N-formylmethionyl-tRNA by promoting its recognition by IF2 and preventing the misappropriation of this tRNA by the elongation apparatus. The protein is Methionyl-tRNA formyltransferase of Shewanella baltica (strain OS195).